A 150-amino-acid polypeptide reads, in one-letter code: MANELNSLDIQEILSLLPHRYPMLLVDRVIDFTPGKSLHAIKNVTINEPIFTGHFPNQPIFPGVLILEAMAQATGLLGFKTVENRSENELYLFAAVDNARFKKPVLPGDTMHLHVEFLKERRNLWKFAAEAKVDGKLVCSAEIMCARREF.

Histidine 54 is an active-site residue.

Belongs to the thioester dehydratase family. FabZ subfamily.

The protein resides in the cytoplasm. The catalysed reaction is a (3R)-hydroxyacyl-[ACP] = a (2E)-enoyl-[ACP] + H2O. Involved in unsaturated fatty acids biosynthesis. Catalyzes the dehydration of short chain beta-hydroxyacyl-ACPs and long chain saturated and unsaturated beta-hydroxyacyl-ACPs. The sequence is that of 3-hydroxyacyl-[acyl-carrier-protein] dehydratase FabZ from Pseudoalteromonas translucida (strain TAC 125).